Reading from the N-terminus, the 1193-residue chain is MGDHLEKSQHALLNEGDENEMEIFGYRTQGCRKALCLIGSIFSLGMLPLVFYWRPAWRVWANCVPCSLQEADVVLLKTTDEFKIYSWKKVIWISLSALSSTSGLTPDHPLITDEGYIINRAIRKPDLKVRYIKVQKIRYVWNNLEGQFQKIGSLEDWLSSAKIHQKFGLGLTSEEQEIRRLICGPNAIDVEITPIWKLLIKEVLNPFYIFQLFSVCLWFSEDYKEYALAIILMSVISIALTVYDLRQQSVKLHHLVESHNSITVSVYERKAGAQDLESRLLVPGDLLILTGSRVQMPCDAILIDGSCVVDEGMLTGESIPVTKTPLSQTASSVPWKMQSEADPRRHVLFCGTEVIQAKAAGSGAVRAVVLQTGFNTAKGDLVRSILYPKPMNFKLYRDAIRFLLCLVGTATIGMVYTLCVYVLSGEPPEEVVRKALDVITIAVPPALPAALTTGIIYAQRRLKKKGIFCISPQRINVCGQLNLVCFDKTGTLTRGGLDPWGVVPCDQNGFQAVHSFASGKALPQGPLCAAMASCHSLILLDGTIQGDPLDLKMFEATKWEMTASGDDLHIKEMLAHTIVVKPTDMVGQVPAEGLAIVHQFPFSSALQRMTVIVQEMGGGRLAFMKGAPERVASFCQPDTVPTSFISELQIYTTQGFRVIALAYKKLEMDCPTTALMREKVESDLVFLGLLILENRLKEETKPVLEELISARIRTVMITGDNLQTAITVARKSGMVSEGQKVILVEANEATGSSSASISWKLVEEKKPGPFGSQDTYINIREEVPENGRDRSYHFALSGKSFHVISQYFSSLLPKILINGTIFARMSPGQKSSLVEEFQKLDYFVGMCGDGANDCGALKMAHVGISLSEQEASVASPFTSKTPNIECVPHLIKEGRAALVTSFCMFKYMALYSMIQYVGVLLLYWKTNSLSNYQFLFQDLAITTLIGVTMNLNGANPKLVPFRPAGRLISPPLLLSVVLNILLSLAMHIVGFILVQKQPWYIMDYHSVCPVRNESASALAASPSVPEKTRSNSTFASFENTTIWFLGTINCIFVALVFSKGKPFRQPTYTNYIFVLVLILQMGVCLFILFADIPEMHRRLDLLCTPVLWRVYILIMISSNFVVSLAVEKAIIENRALWIAVKRCFGYQSKSQYRIWQRNLANDSSWPPLNQTSYSDMQGVSYSNPVFESNEEQL.

Residues 1 to 32 lie on the Cytoplasmic side of the membrane; that stretch reads MGDHLEKSQHALLNEGDENEMEIFGYRTQGCR. The stretch at 33 to 53 is an intramembrane region; that stretch reads KALCLIGSIFSLGMLPLVFYW. The Cytoplasmic portion of the chain corresponds to 54-198; that stretch reads RPAWRVWANC…DVEITPIWKL (145 aa). Residues 199–219 form a helical membrane-spanning segment; that stretch reads LIKEVLNPFYIFQLFSVCLWF. Residues 220–224 are Lumenal-facing; that stretch reads SEDYK. Residues 225 to 245 form a helical membrane-spanning segment; the sequence is EYALAIILMSVISIALTVYDL. Topologically, residues 246 to 401 are cytoplasmic; sequence RQQSVKLHHL…NFKLYRDAIR (156 aa). Residues 402-422 form a helical membrane-spanning segment; that stretch reads FLLCLVGTATIGMVYTLCVYV. The Lumenal segment spans residues 423–437; the sequence is LSGEPPEEVVRKALD. Residues 438-458 traverse the membrane as a helical segment; the sequence is VITIAVPPALPAALTTGIIYA. At 459-901 the chain is on the cytoplasmic side; that stretch reads QRRLKKKGIF…KEGRAALVTS (443 aa). The active-site 4-aspartylphosphate intermediate is D487. Residues D849 and D853 each coordinate Mg(2+). A helical transmembrane segment spans residues 902–922; sequence FCMFKYMALYSMIQYVGVLLL. The Lumenal portion of the chain corresponds to 923 to 933; that stretch reads YWKTNSLSNYQ. A helical membrane pass occupies residues 934–954; sequence FLFQDLAITTLIGVTMNLNGA. Residues 955–973 lie on the Cytoplasmic side of the membrane; the sequence is NPKLVPFRPAGRLISPPLL. Residues 974–994 form a helical membrane-spanning segment; the sequence is LSVVLNILLSLAMHIVGFILV. Residues 995 to 1036 lie on the Lumenal side of the membrane; the sequence is QKQPWYIMDYHSVCPVRNESASALAASPSVPEKTRSNSTFAS. A helical membrane pass occupies residues 1037–1057; that stretch reads FENTTIWFLGTINCIFVALVF. The Cytoplasmic segment spans residues 1058 to 1071; it reads SKGKPFRQPTYTNY. The chain crosses the membrane as a helical span at residues 1072–1092; that stretch reads IFVLVLILQMGVCLFILFADI. Residues 1093–1105 lie on the Lumenal side of the membrane; sequence PEMHRRLDLLCTP. A helical transmembrane segment spans residues 1106–1126; it reads VLWRVYILIMISSNFVVSLAV. At 1127-1193 the chain is on the cytoplasmic side; sequence EKAIIENRAL…PVFESNEEQL (67 aa).

This sequence belongs to the cation transport ATPase (P-type) (TC 3.A.3) family. Type V subfamily. Expressed in brain and stomach.

It is found in the early endosome membrane. The protein localises to the late endosome membrane. Its subcellular location is the recycling endosome membrane. It carries out the reaction ATP + H2O = ADP + phosphate + H(+). This Mus musculus (Mouse) protein is Probable cation-transporting ATPase 13A4 (Atp13a4).